A 103-amino-acid polypeptide reads, in one-letter code: Large ribosomal subunit protein uL24 (103 aa).

Belongs to the universal ribosomal protein uL24 family. Part of the 50S ribosomal subunit.

Functionally, one of two assembly initiator proteins, it binds directly to the 5'-end of the 23S rRNA, where it nucleates assembly of the 50S subunit. Its function is as follows. One of the proteins that surrounds the polypeptide exit tunnel on the outside of the subunit. This Bacillus mycoides (strain KBAB4) (Bacillus weihenstephanensis) protein is Large ribosomal subunit protein uL24.